A 205-amino-acid chain; its full sequence is Holliday junction resolvase RecU (205 aa).

Residues Thr83, Asp85, Glu98, and Gln117 each coordinate Mg(2+).

The protein belongs to the RecU family. It depends on Mg(2+) as a cofactor.

It localises to the cytoplasm. It catalyses the reaction Endonucleolytic cleavage at a junction such as a reciprocal single-stranded crossover between two homologous DNA duplexes (Holliday junction).. Its function is as follows. Endonuclease that resolves Holliday junction intermediates in genetic recombination. Cleaves mobile four-strand junctions by introducing symmetrical nicks in paired strands. Promotes annealing of linear ssDNA with homologous dsDNA. Required for DNA repair, homologous recombination and chromosome segregation. In Streptococcus suis (strain 98HAH33), this protein is Holliday junction resolvase RecU.